The chain runs to 142 residues: MPTIEEIRAQEVWNNCAVRAVTSGVMGGGLGLMMGLFLGALDNPITHDTMTARQQFVFTAKQMGQRSWNSCKTFAVMGLVFSAAECIVEKARAKHDTVNTAIAGCVTGGSMSARGGPKAACIGCAGFAIFSVLIEKFFDRHT.

The next 4 membrane-spanning stretches (helical) occupy residues 21-41 (VTSG…LGAL), 70-88 (SCKT…ECIV), 97-113 (TVNT…SMSA), and 120-137 (ACIG…IEKF).

It belongs to the Tim17/Tim22/Tim23 family.

The protein localises to the mitochondrion inner membrane. Essential core component of the TIM22 complex, a complex that mediates the import and insertion of multi-pass transmembrane proteins into the mitochondrial inner membrane. The sequence is that of Mitochondrial import inner membrane translocase subunit TIM22-4 (TIM22-4) from Arabidopsis thaliana (Mouse-ear cress).